The primary structure comprises 88 residues: Small ribosomal subunit protein uS15 (88 aa).

This sequence belongs to the universal ribosomal protein uS15 family. As to quaternary structure, part of the 30S ribosomal subunit. Forms a bridge to the 50S subunit in the 70S ribosome, contacting the 23S rRNA.

In terms of biological role, one of the primary rRNA binding proteins, it binds directly to 16S rRNA where it helps nucleate assembly of the platform of the 30S subunit by binding and bridging several RNA helices of the 16S rRNA. Its function is as follows. Forms an intersubunit bridge (bridge B4) with the 23S rRNA of the 50S subunit in the ribosome. This chain is Small ribosomal subunit protein uS15, found in Opitutus terrae (strain DSM 11246 / JCM 15787 / PB90-1).